The sequence spans 119 residues: Large ribosomal subunit protein uL18 (119 aa).

It belongs to the universal ribosomal protein uL18 family. As to quaternary structure, part of the 50S ribosomal subunit; part of the 5S rRNA/L5/L18/L25 subcomplex. Contacts the 5S and 23S rRNAs.

This is one of the proteins that bind and probably mediate the attachment of the 5S RNA into the large ribosomal subunit, where it forms part of the central protuberance. The protein is Large ribosomal subunit protein uL18 of Borrelia recurrentis (strain A1).